The following is a 26-amino-acid chain: Acyl carrier protein (26 aa).

A Carrier domain is found at 2-26; that stretch reads SDIEQRIKQAVAEQLGMRAEEIKNE.

It belongs to the acyl carrier protein (ACP) family. 4'-phosphopantetheine is transferred from CoA to a specific serine of apo-ACP by AcpS. This modification is essential for activity because fatty acids are bound in thioester linkage to the sulfhydryl of the prosthetic group.

It is found in the cytoplasm. The protein operates within lipid metabolism; fatty acid biosynthesis. In terms of biological role, carrier of the growing fatty acid chain in fatty acid biosynthesis. The sequence is that of Acyl carrier protein (acpP) from Acinetobacter calcoaceticus.